We begin with the raw amino-acid sequence, 451 residues long: Enolase (451 aa).

Q163 provides a ligand contact to (2R)-2-phosphoglycerate. Catalysis depends on E205, which acts as the Proton donor. 3 residues coordinate Mg(2+): D258, E308, and D335. 4 residues coordinate (2R)-2-phosphoglycerate: K360, R389, S390, and K411. The Proton acceptor role is filled by K360.

Belongs to the enolase family. It depends on Mg(2+) as a cofactor.

The protein localises to the cytoplasm. It localises to the secreted. Its subcellular location is the cell surface. It carries out the reaction (2R)-2-phosphoglycerate = phosphoenolpyruvate + H2O. It functions in the pathway carbohydrate degradation; glycolysis; pyruvate from D-glyceraldehyde 3-phosphate: step 4/5. Its function is as follows. Catalyzes the reversible conversion of 2-phosphoglycerate (2-PG) into phosphoenolpyruvate (PEP). It is essential for the degradation of carbohydrates via glycolysis. The sequence is that of Enolase from Mycoplasma mycoides subsp. mycoides SC (strain CCUG 32753 / NCTC 10114 / PG1).